The following is a 340-amino-acid chain: Uroporphyrinogen decarboxylase (340 aa).

Substrate is bound by residues 21–25, Asp-71, Tyr-148, Ser-203, and His-316; that span reads RQAGR.

The protein belongs to the uroporphyrinogen decarboxylase family. In terms of assembly, homodimer.

The protein localises to the cytoplasm. It carries out the reaction uroporphyrinogen III + 4 H(+) = coproporphyrinogen III + 4 CO2. It participates in porphyrin-containing compound metabolism; protoporphyrin-IX biosynthesis; coproporphyrinogen-III from 5-aminolevulinate: step 4/4. Its function is as follows. Catalyzes the decarboxylation of four acetate groups of uroporphyrinogen-III to yield coproporphyrinogen-III. This is Uroporphyrinogen decarboxylase from Campylobacter concisus (strain 13826).